The following is a 315-amino-acid chain: 31 kDa ribonucleoprotein, chloroplastic (315 aa).

A chloroplast-targeting transit peptide spans methionine 1–serine 71. The segment at alanine 114 to proline 133 is disordered. Acidic residues predominate over residues glycine 115–proline 133. RRM domains are found at residues alanine 136–arginine 214 and tyrosine 230–aspartate 308.

Its subcellular location is the plastid. The protein localises to the chloroplast. Its function is as follows. Could be involved in splicing and/or processing of chloroplast RNA's. The protein is 31 kDa ribonucleoprotein, chloroplastic of Nicotiana sylvestris (Wood tobacco).